We begin with the raw amino-acid sequence, 596 residues long: DNA polymerase kappa (596 aa).

One can recognise a UmuC domain in the interval 85–320; it reads CVCIDMDAYF…LPIRKVGGIG (236 aa). Residues Asp-89 and Asp-180 each coordinate Mg(2+). The active site involves Glu-181. The UBZ4-type zinc-finger motif lies at 516–545; the sequence is TRPCPICGTDVENRLDVMNCHVDECILKVQ. The Zn(2+) site is built by Cys-519, Cys-522, His-536, and Cys-540. The tract at residues 559–584 is disordered; it reads NKSTQKPERPSTKKRKLQEKRPKAKK. Basic residues predominate over residues 570–584; the sequence is TKKRKLQEKRPKAKK.

The protein belongs to the DNA polymerase type-Y family. Requires Mg(2+) as cofactor. It depends on Mn(2+) as a cofactor.

The protein resides in the nucleus. The enzyme catalyses DNA(n) + a 2'-deoxyribonucleoside 5'-triphosphate = DNA(n+1) + diphosphate. DNA polymerase specifically involved in DNA repair. Plays an important role in translesion synthesis, where the normal high-fidelity DNA polymerases cannot proceed and DNA synthesis stalls. Depending on the context, it inserts the correct base, but causes frequent base transitions, transversions and frameshifts. Lacks 3'-5' proofreading exonuclease activity. Forms a Schiff base with 5'-deoxyribose phosphate at abasic sites, but does not have lyase activity. This chain is DNA polymerase kappa (polk-1), found in Caenorhabditis elegans.